Reading from the N-terminus, the 968-residue chain is MPFALGQRWISDTESELGLGTVVQVEGRMVTVLFPATGENRMFSRAEAPLTRVIYNPGDSVESHEGWSLAVSELTEKDGIVIYHGIHSETGEQVTLRETLLNHNIRFNKPQDRLFAGQIDRLDRFGVRYQCQMLRHKLASSDLLGLQGPRVGLIPHQMWIAHEVGRRYAPRVLLADEVGLGKTIEAGLIIHQQLLTGRAERILIIVPDTLRHQWLVEMLRRFNLRFSVFDEDRCVEAYADHDNPFYTEQLVICSLELLRKKKRLDQALDADWDLLVVDEAHHLEWTEEAPSRAYQVVEALSEVIPGVLLLTATPDQLGHESHFARLRLLDPDRFYDYDAFLAEEDSYKDVAIAAEALAGNAKLPDAAINSLTELLGEKDISPSIRLIQADGIDAEVQQAARSELLQELLDRHGTGRVLYRNSRASVKGFPKRFFNAYPHAMPDQYQTAARVSGMMGGHKSLEAKAAQALSPEKLYQEFEDNSASWWKFDPRVDWLIEFLKSHRSKKVLIIASQAETALSLEEALRTREGIQATVFHEGMSIIERDKAGAYFAQEEGGAQALICSEIGSEGRNFQFASHLVLFDLPLNPDLLEQRIGRLDRIGQKNDIQIHLPYLEDTAQERLMQWYHQGLNAFELTCPSGHVLYSEFAEDLLNVLVVDDSDELTNLLNHTQSRYKELKHAMEQGRDKLLEINSHGGEKAMAIVQRLAQNDGDTHLIGSVIRLWDIIGVDQEDKGENSIILRPSEHMMFPTYPGLPEDGVTVTFDRDTALSRDDIALITQEHPLVQTGLDLITGSETGTTSVAILKNKALPAGTLFLELIYMADASAPKSSQLYRYLPPTPIRVLLDKNGNDLSAKVDYASFDKQLSAVNRHIGGKLVTASQPILHPLFAKGEEYAQVVVDEMVAQAREKMTQQLSAELSRLESLKAVNPNIREEELEYLRNQMQELNTYLDASQLQLDAIRMVLVSHV.

The Helicase ATP-binding domain maps to 163 to 332; it reads EVGRRYAPRV…FARLRLLDPD (170 aa). 176–183 contacts ATP; it reads DEVGLGKT. Positions 278-281 match the DEAH box motif; the sequence is DEAH. The region spanning 491-655 is the Helicase C-terminal domain; the sequence is RVDWLIEFLK…EFAEDLLNVL (165 aa).

Belongs to the SNF2/RAD54 helicase family. RapA subfamily. In terms of assembly, interacts with the RNAP. Has a higher affinity for the core RNAP than for the holoenzyme. Its ATPase activity is stimulated by binding to RNAP.

Its function is as follows. Transcription regulator that activates transcription by stimulating RNA polymerase (RNAP) recycling in case of stress conditions such as supercoiled DNA or high salt concentrations. Probably acts by releasing the RNAP, when it is trapped or immobilized on tightly supercoiled DNA. Does not activate transcription on linear DNA. Probably not involved in DNA repair. The chain is RNA polymerase-associated protein RapA from Shewanella baltica (strain OS223).